The chain runs to 66 residues: Surface composition regulator (66 aa).

Belongs to the GlgS family.

Major determinant of cell surface composition. Negatively regulates motility, adhesion and synthesis of biofilm exopolysaccharides. This is Surface composition regulator from Escherichia coli O139:H28 (strain E24377A / ETEC).